Reading from the N-terminus, the 447-residue chain is Transducin beta-like protein 2 (447 aa).

Residues 38–72 (RSGRPACQKANGFPPDKSSGSKKQKQYQRIRKEKP) are disordered. A compositionally biased stretch (basic residues) spans 57 to 69 (GSKKQKQYQRIRK). 7 WD repeats span residues 88-127 (SHSG…QREH), 134-174 (VELD…DGGY), 186-226 (KHKA…STIN), 228-267 (NQMN…GEFQ), 277-316 (GHSA…KKKQ), 329-367 (AAGA…KEEC), and 371-409 (VHGE…RAMV). Lys-168 participates in a covalent cross-link: Glycyl lysine isopeptide (Lys-Gly) (interchain with G-Cter in SUMO2). Thr-433 bears the Phosphothreonine; by ATM or ATR mark.

This chain is Transducin beta-like protein 2 (TBL2), found in Homo sapiens (Human).